Consider the following 335-residue polypeptide: MSNIVGIEYNRVTNTTSTDFPGFSKDAENEWNVEKFKKDFEVNISSLDAREANFDLINIDTSIANAFRRIMISEVPSVAAEYVYFFNNTSVIQDEVLAHRIGLVPLKVDPDMLTWVDSNLPDDEKFTDENTIVLSLNVKCTRNPDAPKGSTDPKELYNNAHVYARDLKFEPQGRQSTTFADCPVVPADPDILLAKLRPGQEISLKAHCILGIGGDHAKFSPVSTASYRLLPQINILQPIKGESARRFQKCFPPGVIGIDEGSDEAYVKDARKDTVSREVLRYEEFADKVKLGRVRNHFIFNVESAGAMTPEEIFFKSVRILKNKAEYLKNCPITQ.

An N-acetylserine modification is found at S2. S17 bears the Phosphoserine mark.

It belongs to the archaeal Rpo3/eukaryotic RPB3 RNA polymerase subunit family. In terms of assembly, component of the RNA polymerase I (Pol I) complex consisting of 14 subunits: RPA135, RPA190, RPC40, RPA14, RPB5, RPO26, RPA43, RPB8, RPA12, RPB10, RPC19, RPC10, RPA49 and RPA34. The complex is composed of a horseshoe-shaped core containing ten subunits (RPA135, RPA190, RPB5, RPO26, RPB8, RPB10, RPC10, RPA12, RPC19 and RPC40) where RPA135 and RPA190 form the DNA-binding cleft. Outside of the core, RPA14 and RPA43 form the stalk that mediates interactions with transcription initiation factors and newly synthesized RNA. Component of the RNA polymerase III (Pol III) complex consisting of at least 17 subunits. Interacts with the RPC19/RPAC2 and RPC53/RPC4. Interacts with retrotransposons Ty integrase, targeting Ty1, Ty2 and Ty4 integration upstream of pol III-transcribed genes.

Its subcellular location is the nucleus. It localises to the nucleolus. DNA-dependent RNA polymerases catalyze the transcription of DNA into RNA using the four ribonucleoside triphosphates as substrates. Common component of RNA polymerases I (Pol I) and III (Pol III) which synthesize ribosomal RNA precursors and small RNAs, such as 5S rRNA and tRNAs, respectively. RPC40 is part of the polymerase core and may function as a clamp element that moves to open and close the cleft. Plays an important role in targeting retrotransposons Ty integration upstream of pol III-transcribed genes such as tRNA genes, allowing Ty1, Ty2 and Ty4 to proliferate and yet minimizing genetic damage. The chain is DNA-directed RNA polymerases I and III subunit RPAC1 from Saccharomyces cerevisiae (strain ATCC 204508 / S288c) (Baker's yeast).